The primary structure comprises 553 residues: Arginine--tRNA ligase (553 aa).

A 'HIGH' region motif is present at residues 130-140 (ANPTGDLHIGH).

The protein belongs to the class-I aminoacyl-tRNA synthetase family. In terms of assembly, monomer.

The protein localises to the cytoplasm. The catalysed reaction is tRNA(Arg) + L-arginine + ATP = L-arginyl-tRNA(Arg) + AMP + diphosphate. The polypeptide is Arginine--tRNA ligase (Staphylococcus aureus (strain bovine RF122 / ET3-1)).